The primary structure comprises 472 residues: Uronate isomerase (472 aa).

The protein belongs to the metallo-dependent hydrolases superfamily. Uronate isomerase family.

It catalyses the reaction D-glucuronate = D-fructuronate. It carries out the reaction aldehydo-D-galacturonate = keto-D-tagaturonate. The protein operates within carbohydrate metabolism; pentose and glucuronate interconversion. This is Uronate isomerase from Nostoc punctiforme (strain ATCC 29133 / PCC 73102).